A 130-amino-acid chain; its full sequence is Sec-independent protein translocase protein TatB (130 aa).

The helical transmembrane segment at 1-21 threads the bilayer; that stretch reads MFDIGFWELVLIFVVGLVVLG. The segment at 85–130 is disordered; it reads LKQAAQSVNRPYADVSAKNEATSSSSSDATHQTEATKTSAANTKSE. Positions 112-130 are enriched in polar residues; that stretch reads DATHQTEATKTSAANTKSE.

The protein belongs to the TatB family. As to quaternary structure, the Tat system comprises two distinct complexes: a TatABC complex, containing multiple copies of TatA, TatB and TatC subunits, and a separate TatA complex, containing only TatA subunits. Substrates initially bind to the TatABC complex, which probably triggers association of the separate TatA complex to form the active translocon.

It is found in the cell inner membrane. Its function is as follows. Part of the twin-arginine translocation (Tat) system that transports large folded proteins containing a characteristic twin-arginine motif in their signal peptide across membranes. Together with TatC, TatB is part of a receptor directly interacting with Tat signal peptides. TatB may form an oligomeric binding site that transiently accommodates folded Tat precursor proteins before their translocation. In Vibrio vulnificus (strain CMCP6), this protein is Sec-independent protein translocase protein TatB.